The chain runs to 101 residues: Small ribosomal subunit protein uS14 (101 aa).

The disordered stretch occupies residues 32-62 (GDAKRSDAEREAARLGLQKLPRNANPTRQRN). The span at 33 to 44 (DAKRSDAEREAA) shows a compositional bias: basic and acidic residues.

This sequence belongs to the universal ribosomal protein uS14 family. As to quaternary structure, part of the 30S ribosomal subunit. Contacts proteins S3 and S10.

In terms of biological role, binds 16S rRNA, required for the assembly of 30S particles and may also be responsible for determining the conformation of the 16S rRNA at the A site. The protein is Small ribosomal subunit protein uS14 of Verminephrobacter eiseniae (strain EF01-2).